A 143-amino-acid chain; its full sequence is SLSATDKARVKALWDKIEGKSAELGAEALGRMLVSFPQTKIYFSEWGQDLGPQTPQVRNHGAVIMAAVGKAVKSIDNLVGGLSQLSELHAFKLRVDPANFKILAHNIILVISMYFPGDFTPEVHLSVDKFLACLALALSEKYR.

An N-acetylserine modification is found at serine 1. In terms of domain architecture, Globin spans 1-143; sequence SLSATDKARV…LALALSEKYR (143 aa). Histidine 60 contacts O2. Residue histidine 89 participates in heme b binding.

Belongs to the globin family. Heterotetramer of two alpha chains and two beta chains. As to expression, red blood cells.

Its function is as follows. Involved in oxygen transport from gills to the various peripheral tissues. This Leiostomus xanthurus (Spot) protein is Hemoglobin subunit alpha (hba).